Reading from the N-terminus, the 446-residue chain is 5-methylthioadenosine/S-adenosylhomocysteine deaminase (446 aa).

Residues His72 and His74 each coordinate Zn(2+). Glu101 and His194 together coordinate substrate. A Zn(2+)-binding site is contributed by His221. Positions 224 and 309 each coordinate substrate. Asp309 is a binding site for Zn(2+).

This sequence belongs to the metallo-dependent hydrolases superfamily. MTA/SAH deaminase family. Requires Zn(2+) as cofactor.

It catalyses the reaction S-adenosyl-L-homocysteine + H2O + H(+) = S-inosyl-L-homocysteine + NH4(+). The enzyme catalyses S-methyl-5'-thioadenosine + H2O + H(+) = S-methyl-5'-thioinosine + NH4(+). Catalyzes the deamination of 5-methylthioadenosine and S-adenosyl-L-homocysteine into 5-methylthioinosine and S-inosyl-L-homocysteine, respectively. Is also able to deaminate adenosine. This Saccharophagus degradans (strain 2-40 / ATCC 43961 / DSM 17024) protein is 5-methylthioadenosine/S-adenosylhomocysteine deaminase.